The sequence spans 1399 residues: MKDLLNLLKNQGQVEEFDAIRIGLASPEMIRSWSFGEVKKPETINYRTFKPERDGLFCAKIFGPVKDYECLCGKYKRLKHRGVICEKCGVEVALAKVRRERMAHIELASPVAHIWFLKSLPSRIGLLMDMTLRDIERVLYFESYVVIDPGMTTLEKGQLLNDEQYFEALEEFGDDFDARMGAEAVRELLHAIDLEHEIGRLREEIPQTNSETKIKKLSKRLKLMEAFQGSGNLPEWMVLTVLPVLPPDLRPLVPLDGGRFATSDLNDLYRRVINRNNRLKRLLDLSAPDIIVRNEKRMLQEAVDALLDNGRRGRAITGSNKRPLKSLADMIKGKQGRFRQNLLGKRVDYSGRSVITVGPTLRLHQCGLPKKMALELFKPFIFGKLEMRGLATTIKAAKKMVERELPEVWDVLAEVIREHPVLLNRAPTLHRLGIQAFEPVLIEGKAIQLHPLVCAAYNADFDGDQMAVHVPLTLEAQLEARALMMSTNNILSPANGEPIIVPSQDVVLGLYYMTREAINAKGEGRVFADLQEVDRVFRAGEAALHAKVKVRINETVNDRDGGSVTNTRIVDTTVGRALLYQVVPKGLSYDVVNLPMKKKAISKLINQCYRVVGLKETVIFADQLMYTGFAYSTISGVSIGVNDFVIPDEKAQIIGAATDEVKEIESQYASGLVTQGEKYNKVIDLWSKANDEVSKAMMANLSKEKVIDRHGVEVDQESFNSMYMMADSGARGSAAQIRQLAGMRGLMAKPDGSIIETPITANFREGLSVLQYFISTHGARKGLADTALKTANSGYLTRRLVDVAQDLVVTEVDCGTEHGLLMTPHIEGGDVVEPLGERVLGRVIARDVFKPGTEEIIVPAGTLVDEKWVEFIELNSIDEVIVRSPISCETRYGICAKCYGRDLARGHQVNIGEAVGVIAAQSIGEPGTQLTMRTFHIGGAASRTSAADSVQVKNGGTVRLHNLKHVERVDGHLVAVSRSGELAIADDYGRERERYKLPYGAVISVKEGDKVDAGAIVAKWDPHTHPIVTEMKGTVTYVGMEEGITIKRQTDELTGMTNIEVLDAKDRPAAGKDIRPAVKMVDDNGKDLLLPGTDVIAQYFLPANALVGVADGAKIAIGDVIARIPQETSKTRDITGGLPRVADLFEARRPKEASILAEVSGTIAFGKETKGKRRLVITPNDGSDPYEELIPKWRHLNVFEGEQVNRGEVISDGPSDPHDILRLLGVSALAKYIVNEIQDVYRLQGVKINDKHIETILRQMLRKVEIAESGDSSFIKGDQMELTHVLVENERLGAEDKFVSKFTRVLLGITKASLSTESFISAASFQETTRVLTEAAVTGKRDYLRGLKENVVVGRLIPAGTGLAYHSERKRRRDADKPLRVSASEVEAALTEALNSSGN.

Zn(2+) is bound by residues Cys-70, Cys-72, Cys-85, and Cys-88. Positions 460, 462, and 464 each coordinate Mg(2+). Zn(2+) contacts are provided by Cys-814, Cys-888, Cys-895, and Cys-898.

Belongs to the RNA polymerase beta' chain family. In terms of assembly, the RNAP catalytic core consists of 2 alpha, 1 beta, 1 beta' and 1 omega subunit. When a sigma factor is associated with the core the holoenzyme is formed, which can initiate transcription. Requires Mg(2+) as cofactor. The cofactor is Zn(2+).

The enzyme catalyses RNA(n) + a ribonucleoside 5'-triphosphate = RNA(n+1) + diphosphate. Functionally, DNA-dependent RNA polymerase catalyzes the transcription of DNA into RNA using the four ribonucleoside triphosphates as substrates. This Pseudomonas fluorescens (strain SBW25) protein is DNA-directed RNA polymerase subunit beta'.